We begin with the raw amino-acid sequence, 325 residues long: Germination protease (325 aa).

Residues 1-7 constitute a propeptide that is removed on maturation; it reads MYNVRTD.

The protein belongs to the peptidase A25 family. As to quaternary structure, homotetramer. Autoproteolytically processed. The inactive tetrameric zymogen termed p46 autoprocesses to a smaller form termed p41, which is active only during spore germination.

It carries out the reaction Endopeptidase action with P4 Glu or Asp, P1 preferably Glu &gt; Asp, P1' hydrophobic and P2' Ala.. In terms of biological role, initiates the rapid degradation of small, acid-soluble proteins during spore germination. The chain is Germination protease from Clostridium perfringens (strain ATCC 13124 / DSM 756 / JCM 1290 / NCIMB 6125 / NCTC 8237 / Type A).